The sequence spans 484 residues: Cobyric acid synthase (484 aa).

One can recognise a GATase cobBQ-type domain in the interval 251–438; sequence ALKIAVPVLS…LHGLFGNDEY (188 aa). C333 serves as the catalytic Nucleophile. H430 is a catalytic residue.

It belongs to the CobB/CobQ family. CobQ subfamily.

Its pathway is cofactor biosynthesis; adenosylcobalamin biosynthesis. Its function is as follows. Catalyzes amidations at positions B, D, E, and G on adenosylcobyrinic A,C-diamide. NH(2) groups are provided by glutamine, and one molecule of ATP is hydrogenolyzed for each amidation. This is Cobyric acid synthase from Allorhizobium ampelinum (strain ATCC BAA-846 / DSM 112012 / S4) (Agrobacterium vitis (strain S4)).